The primary structure comprises 252 residues: Sugar fermentation stimulation protein homolog (252 aa).

The protein belongs to the SfsA family.

This Picosynechococcus sp. (strain ATCC 27264 / PCC 7002 / PR-6) (Agmenellum quadruplicatum) protein is Sugar fermentation stimulation protein homolog.